The primary structure comprises 87 residues: Sec-independent protein translocase protein TatA (87 aa).

Residues methionine 1 to glycine 21 form a helical membrane-spanning segment. Residues asparagine 54–valine 87 form a disordered region.

The protein belongs to the TatA/E family. The Tat system comprises two distinct complexes: a TatABC complex, containing multiple copies of TatA, TatB and TatC subunits, and a separate TatA complex, containing only TatA subunits. Substrates initially bind to the TatABC complex, which probably triggers association of the separate TatA complex to form the active translocon.

Its subcellular location is the cell inner membrane. Functionally, part of the twin-arginine translocation (Tat) system that transports large folded proteins containing a characteristic twin-arginine motif in their signal peptide across membranes. TatA could form the protein-conducting channel of the Tat system. The protein is Sec-independent protein translocase protein TatA of Photobacterium profundum (strain SS9).